The sequence spans 232 residues: Ras-related protein RabP (232 aa).

15-22 (GNYGVGKS) serves as a coordination point for GTP. The short motif at 35-40 (DNTTGF) is the Effector region element. Residues 58 to 62 (DTSGQ) and 118 to 121 (NKFD) contribute to the GTP site. Residues cysteine 229 and cysteine 230 are each lipidated (S-geranylgeranyl cysteine).

The protein belongs to the small GTPase superfamily. Rab family.

It localises to the cell membrane. The sequence is that of Ras-related protein RabP (rabP) from Dictyostelium discoideum (Social amoeba).